Consider the following 350-residue polypeptide: Phosphatidylinositol transfer protein PDR17 (350 aa).

In terms of domain architecture, CRAL-TRIO spans 139-297 (KVAVENETGK…LYNGLLDFKY (159 aa)).

In terms of assembly, interacts with phosphatidylserine decarboxylase PSD2. Also interacts with PBI1.

It localises to the cytoplasm. It is found in the microsome. The catalysed reaction is a 1,2-diacyl-sn-glycero-3-phospho-(1D-myo-inositol)(in) = a 1,2-diacyl-sn-glycero-3-phospho-(1D-myo-inositol)(out). Has phosphatidylinositol transfer activity. Involved in the regulation of the phospholipid composition of plasma- and endomembranes. Altering plasma membrane composition may provide a possible mechanism for multidrug resistance. Contributes to efficient phospholipase D1 activation and phospholipase B1 inhibition in the regulation of phospholipid turnover. Forms a complex with phosphatidylserine decarboxylase PSD2 that seems essential for maintenance of vacuolar phosphatidylethanolamine (PE) levels. Allows interorganelle phosphatidylserine (PtdSer) transport via a process that involves the acceptor membrane complex PDR17-PDS2 that binds to PBI1 which in turn ligates to SCS2 and phosphatidic acid present in the donor membrane, forming a zone of apposition that facilitates PtdSer transfer. This chain is Phosphatidylinositol transfer protein PDR17, found in Saccharomyces cerevisiae (strain ATCC 204508 / S288c) (Baker's yeast).